Here is a 206-residue protein sequence, read N- to C-terminus: ATP-dependent Clp protease proteolytic subunit (206 aa).

Residue serine 107 is the Nucleophile of the active site. The active site involves histidine 132.

It belongs to the peptidase S14 family. Fourteen ClpP subunits assemble into 2 heptameric rings which stack back to back to give a disk-like structure with a central cavity, resembling the structure of eukaryotic proteasomes.

It localises to the cytoplasm. The catalysed reaction is Hydrolysis of proteins to small peptides in the presence of ATP and magnesium. alpha-casein is the usual test substrate. In the absence of ATP, only oligopeptides shorter than five residues are hydrolyzed (such as succinyl-Leu-Tyr-|-NHMec, and Leu-Tyr-Leu-|-Tyr-Trp, in which cleavage of the -Tyr-|-Leu- and -Tyr-|-Trp bonds also occurs).. Cleaves peptides in various proteins in a process that requires ATP hydrolysis. Has a chymotrypsin-like activity. Plays a major role in the degradation of misfolded proteins. The sequence is that of ATP-dependent Clp protease proteolytic subunit from Idiomarina loihiensis (strain ATCC BAA-735 / DSM 15497 / L2-TR).